Reading from the N-terminus, the 103-residue chain is Co-chaperonin GroES (103 aa).

The protein belongs to the GroES chaperonin family. As to quaternary structure, heptamer of 7 subunits arranged in a ring. Interacts with the chaperonin GroEL.

The protein localises to the cytoplasm. Its function is as follows. Together with the chaperonin GroEL, plays an essential role in assisting protein folding. The GroEL-GroES system forms a nano-cage that allows encapsulation of the non-native substrate proteins and provides a physical environment optimized to promote and accelerate protein folding. GroES binds to the apical surface of the GroEL ring, thereby capping the opening of the GroEL channel. This chain is Co-chaperonin GroES, found in Prochlorococcus marinus (strain MIT 9211).